The primary structure comprises 400 residues: Pyruvate dehydrogenase E1 component subunit beta-4, chloroplastic (400 aa).

The disordered stretch occupies residues 1–34; sequence MAAASSLHAAPRVGSSSSFSSSSSAGRRSASAAR. The transit peptide at 1–57 directs the protein to the chloroplast; it reads MAAASSLHAAPRVGSSSSFSSSSSAGRRSASAARSVRVAAAAGSCAARRAGGRMVAR. Over residues 9–34 the composition is skewed to low complexity; it reads AAPRVGSSSSFSSSSSAGRRSASAAR. Glu-136 lines the thiamine diphosphate pocket. Residues Ile-189, Ala-237, Ile-238, and Asn-242 each coordinate K(+).

In terms of assembly, tetramer of 2 alpha and 2 beta subunits. Requires thiamine diphosphate as cofactor.

Its subcellular location is the plastid. The protein resides in the chloroplast. The catalysed reaction is N(6)-[(R)-lipoyl]-L-lysyl-[protein] + pyruvate + H(+) = N(6)-[(R)-S(8)-acetyldihydrolipoyl]-L-lysyl-[protein] + CO2. Its function is as follows. The pyruvate dehydrogenase complex catalyzes the overall conversion of pyruvate to acetyl-CoA and CO(2). It contains multiple copies of three enzymatic components: pyruvate dehydrogenase (E1), dihydrolipoamide acetyltransferase (E2) and lipoamide dehydrogenase (E3). This chain is Pyruvate dehydrogenase E1 component subunit beta-4, chloroplastic, found in Oryza sativa subsp. japonica (Rice).